Consider the following 139-residue polypeptide: Large ribosomal subunit protein uL24 (139 aa).

The disordered stretch occupies residues 1 to 25; that stretch reads MKRNTNVSSSRRKSRKAHFTASSGE.

This sequence belongs to the universal ribosomal protein uL24 family.

This Dictyostelium discoideum (Social amoeba) protein is Large ribosomal subunit protein uL24 (rpl26).